A 485-amino-acid polypeptide reads, in one-letter code: Aspartyl/glutamyl-tRNA(Asn/Gln) amidotransferase subunit B (485 aa).

Belongs to the GatB/GatE family. GatB subfamily. Heterotrimer of A, B and C subunits.

The catalysed reaction is L-glutamyl-tRNA(Gln) + L-glutamine + ATP + H2O = L-glutaminyl-tRNA(Gln) + L-glutamate + ADP + phosphate + H(+). The enzyme catalyses L-aspartyl-tRNA(Asn) + L-glutamine + ATP + H2O = L-asparaginyl-tRNA(Asn) + L-glutamate + ADP + phosphate + 2 H(+). In terms of biological role, allows the formation of correctly charged Asn-tRNA(Asn) or Gln-tRNA(Gln) through the transamidation of misacylated Asp-tRNA(Asn) or Glu-tRNA(Gln) in organisms which lack either or both of asparaginyl-tRNA or glutaminyl-tRNA synthetases. The reaction takes place in the presence of glutamine and ATP through an activated phospho-Asp-tRNA(Asn) or phospho-Glu-tRNA(Gln). This chain is Aspartyl/glutamyl-tRNA(Asn/Gln) amidotransferase subunit B, found in Rhodospirillum rubrum (strain ATCC 11170 / ATH 1.1.1 / DSM 467 / LMG 4362 / NCIMB 8255 / S1).